A 465-amino-acid chain; its full sequence is Lysophospholipid acyltransferase 2 (465 aa).

9 helical membrane passes run 15–35 (VSVAVLRFLLCFVATIPISFL), 55–75 (FLSYLSFGFSSNLHFLVPMTI), 86–106 (LSGFITFFLGFAYLIGCHVFY), 161–181 (SLIEYFGYCLCCGSHFAGPVF), 214–234 (AVFQAAICMALYLYLVPQFPL), 266–286 (YFIWSISEASIIISGLGFSGW), 356–376 (AVWHGLYPGYIIFFVQSALMI), 399–419 (VLVLINFLYTVVVLNYSSVGF), and 434–454 (VYYIGTVIPIAVLLLSYLVPV). Residue histidine 359 is part of the active site.

This sequence belongs to the membrane-bound acyltransferase family. In terms of assembly, interacts with GPAT9 and DGAT1. Expressed in rosette leaves, pollen grains, developing embryos and developing seeds.

The protein localises to the endoplasmic reticulum membrane. It catalyses the reaction a 1-acyl-sn-glycero-3-phosphocholine + an acyl-CoA = a 1,2-diacyl-sn-glycero-3-phosphocholine + CoA. The catalysed reaction is 1-(9Z-octadecenoyl)-sn-glycero-3-phosphocholine + (9Z)-octadecenoyl-CoA = 1,2-di-(9Z-octadecenoyl)-sn-glycero-3-phosphocholine + CoA. The enzyme catalyses 1-(9Z-octadecenoyl)-sn-glycero-3-phosphocholine + (9Z,12Z)-octadecadienoyl-CoA = 1-(9Z)-octadecenoyl-2-(9Z,12Z)-octadecadienoyl-sn-glycero-3-phosphocholine + CoA. It carries out the reaction (9Z,12Z,15Z)-octadecatrienoyl-CoA + 1-(9Z-octadecenoyl)-sn-glycero-3-phosphocholine = 1-(9Z-octadecaenoyl)-2-(9Z,12Z,15Z-octadecatrienoyl)-sn-glycero-3-phosphocholine + CoA. It catalyses the reaction a 1-acyl-sn-glycero-3-phosphoethanolamine + an acyl-CoA = a 1,2-diacyl-sn-glycero-3-phosphoethanolamine + CoA. The catalysed reaction is a 1-acyl-sn-glycero-3-phospho-L-serine + an acyl-CoA = a 1,2-diacyl-sn-glycero-3-phospho-L-serine + CoA. In terms of biological role, lysophospholipid acyltransferase with broad specificity. Mediates the conversion of lysophosphatidylethanolamine (1-acyl-sn-glycero-3-phosphoethanolamine or LPE) into phosphatidylethanolamine (1,2-diacyl-sn-glycero-3-phosphoethanolamine or PE) (LPEAT activity). Catalyzes the acylation of lysophosphatidylserine (1-acyl-2-hydroxy-sn-glycero-3-phospho-L-serine or LPS) into phosphatidylserine (1,2-diacyl-sn-glycero-3-phospho-L-serine or PS) (LPSAT activity). Can convert lysophosphatidylcholine (1-acyl-sn-glycero-3-phosphocholine or LPC) into phosphatidylcholine (1,2-diacyl-sn-glycero-3-phosphocholine or PC) (LPCAT activity). Exhibits preference for C18-unsaturated acyl-CoA when transferring an acyl group to lysophosphatidylcholine. Can also utilize lysophosphatidylglycerol (LPG) as substrate in vitro. Has neither activity towards lysophosphatidic acid (LPA) nor lysophosphatidylinositol (LPI). Lysophospholipid acyltransferases catalyze the reacylation step of the phospholipid remodeling pathway also known as the Lands cycle. The primary function of the Lands cycle is to provide a route for acyl remodeling to modify fatty acid (FA) composition of phospholipids derived from the Kennedy pathway. Is involved in PC acyl editing and phosphocholine headgroup exchange between PC and diacylglycerols. This processes control the majority of acyl fluxes through PC to provide polyunsaturated fatty acids for triacylglycerols synthesis in seeds. Involved with LPCAT1 in the direct incorporation of newly synthesized fatty acids exported form the chloroplast into PC through acyl editing. This Arabidopsis thaliana (Mouse-ear cress) protein is Lysophospholipid acyltransferase 2.